The chain runs to 561 residues: uncharacterized protein (561 aa).

Polar residues predominate over residues 1-11 (MSQVSLPSQLK). 2 disordered regions span residues 1–22 (MSQVSLPSQLKETGPRLQSRCR) and 522–561 (CSLPQSSPDPVPDGSPRPKQQPQQAQAEQAQQPQQQIMLP). A compositionally biased stretch (low complexity) spans 541 to 561 (QQPQQAQAEQAQQPQQQIMLP).

This sequence to Synechocystis PCC 6803 sll0335 and to M.tuberculosis Rv2567.

This is an uncharacterized protein from Mycobacterium leprae (strain TN).